A 1523-amino-acid chain; its full sequence is uncharacterized protein (1523 aa).

Residues 1 to 89 (MLPTSSNNEE…GSSNMNPYDR (89 aa)) form a disordered region. 993-1000 (SPFGCGKS) is an ATP binding site. Composition is skewed to polar residues over residues 1463 to 1476 (TSRQSKQQRANEYN) and 1485 to 1498 (QSNNDYGSQRSVTN). Residues 1463–1498 (TSRQSKQQRANEYNSQHKHVKRQSNNDYGSQRSVTN) are disordered.

It belongs to the DNA2/NAM7 helicase family.

This is an uncharacterized protein from Caenorhabditis elegans.